The sequence spans 239 residues: Elongation factor Ts (239 aa).

Residues 82 to 85 (TDFV) are involved in Mg(2+) ion dislocation from EF-Tu. The interval 213 to 239 (AAQTKPKAEEKPAAKKATSKKKKGKKK) is disordered. A compositionally biased stretch (basic residues) spans 229–239 (ATSKKKKGKKK).

Belongs to the EF-Ts family.

It is found in the cytoplasm. Associates with the EF-Tu.GDP complex and induces the exchange of GDP to GTP. It remains bound to the aminoacyl-tRNA.EF-Tu.GTP complex up to the GTP hydrolysis stage on the ribosome. In Acaryochloris marina (strain MBIC 11017), this protein is Elongation factor Ts.